Reading from the N-terminus, the 230-residue chain is Lipopolysaccharide core heptose(II) kinase WaaY (230 aa).

Belongs to the protein kinase superfamily. RfaY/WaaY family.

The enzyme catalyses alpha-D-Glc-(1-&gt;3)-[L-alpha-D-Hep-(1-&gt;7)]-L-alpha-D-Hep-(1-&gt;3)-4-O-PO3(2-)-L-alpha-D-Hep-(1-&gt;5)-[alpha-Kdo-(2-&gt;4)]-alpha-Kdo-(2-&gt;6)-lipid A + ATP = alpha-D-Glc-(1-&gt;3)-[L-alpha-D-Hep-(1-&gt;7)]-4-O-PO3(2-)-L-alpha-D-Hep-(1-&gt;3)-4-O-PO3(2-)-L-alpha-D-Hep-(1-&gt;5)-[alpha-Kdo-(2-&gt;4)]-alpha-Kdo-(2-&gt;6)-lipid A + ADP + H(+). Its pathway is bacterial outer membrane biogenesis; LPS core biosynthesis. Its function is as follows. Kinase involved in the biosynthesis of the core oligosaccharide region of lipopolysaccharide (LPS). Catalyzes the phosphorylation of the second heptose unit (HepII) of the inner core. This is Lipopolysaccharide core heptose(II) kinase WaaY from Escherichia coli.